The following is a 601-amino-acid chain: Elongation factor 4 (601 aa).

The tr-type G domain occupies 7-189 (SHIRNFSIIA…SIVQLVPPPQ (183 aa)). Residues 19–24 (DHGKST) and 136–139 (NKID) each bind GTP.

The protein belongs to the TRAFAC class translation factor GTPase superfamily. Classic translation factor GTPase family. LepA subfamily.

The protein localises to the cell inner membrane. It catalyses the reaction GTP + H2O = GDP + phosphate + H(+). Required for accurate and efficient protein synthesis under certain stress conditions. May act as a fidelity factor of the translation reaction, by catalyzing a one-codon backward translocation of tRNAs on improperly translocated ribosomes. Back-translocation proceeds from a post-translocation (POST) complex to a pre-translocation (PRE) complex, thus giving elongation factor G a second chance to translocate the tRNAs correctly. Binds to ribosomes in a GTP-dependent manner. The polypeptide is Elongation factor 4 (Trichodesmium erythraeum (strain IMS101)).